A 365-amino-acid polypeptide reads, in one-letter code: Chorismate synthase (365 aa).

2 residues coordinate NADP(+): arginine 48 and arginine 54. FMN-binding positions include 131 to 133, 243 to 244, glycine 288, 303 to 307, and arginine 329; these read RSS, NA, and KPTSS.

It belongs to the chorismate synthase family. Homotetramer. It depends on FMNH2 as a cofactor.

It catalyses the reaction 5-O-(1-carboxyvinyl)-3-phosphoshikimate = chorismate + phosphate. It participates in metabolic intermediate biosynthesis; chorismate biosynthesis; chorismate from D-erythrose 4-phosphate and phosphoenolpyruvate: step 7/7. Functionally, catalyzes the anti-1,4-elimination of the C-3 phosphate and the C-6 proR hydrogen from 5-enolpyruvylshikimate-3-phosphate (EPSP) to yield chorismate, which is the branch point compound that serves as the starting substrate for the three terminal pathways of aromatic amino acid biosynthesis. This reaction introduces a second double bond into the aromatic ring system. The sequence is that of Chorismate synthase from Sinorhizobium fredii (strain NBRC 101917 / NGR234).